The chain runs to 453 residues: AP-4 complex subunit mu-1 (453 aa).

In terms of domain architecture, MHD spans 184–452; that stretch reads KNEVFLDVVE…LSHSDAYVIR (269 aa).

This sequence belongs to the adaptor complexes medium subunit family. As to quaternary structure, adaptor protein complex 4 (AP-4) is a heterotetramer composed of two large adaptins (epsilon-type subunit AP4E1 and beta-type subunit AP4B1), a medium adaptin (mu-type subunit AP4M1) and a small adaptin (sigma-type AP4S1). Interacts with tyrosine-based sorting signals on the cytoplasmic tail of cargo proteins such as APP, ATG9A, LAMP2 and NAGPA. Interacts with the C-terminal domain of GRID2. Interacts with GRIA1 and GRIA2; the interaction is indirect via CACNG3. Interacts with CACNG3; CACNG3 associates GRIA1 and GRIA2 with the adaptor protein complex 4 (AP-4) to target them to the somatodendritic compartment of neurons. Interacts with HOOK1 and HOOK2; the interactions are direct, mediate the interaction between FTS-Hook-FHIP (FHF) complex and AP-4 and the perinuclear distribution of AP-4. In terms of tissue distribution, ubiquitous. Highly expressed in testis and lowly expressed in brain and lung.

The protein localises to the golgi apparatus. The protein resides in the trans-Golgi network membrane. It localises to the early endosome. Functionally, component of the adaptor protein complex 4 (AP-4). Adaptor protein complexes are vesicle coat components involved both in vesicle formation and cargo selection. They control the vesicular transport of proteins in different trafficking pathways. AP-4 forms a non clathrin-associated coat on vesicles departing the trans-Golgi network (TGN) and may be involved in the targeting of proteins from the trans-Golgi network (TGN) to the endosomal-lysosomal system. It is also involved in protein sorting to the basolateral membrane in epithelial cells and the proper asymmetric localization of somatodendritic proteins in neurons. Within AP-4, the mu-type subunit AP4M1 is directly involved in the recognition and binding of tyrosine-based sorting signals found in the cytoplasmic part of cargos. The adaptor protein complex 4 (AP-4) may also recognize other types of sorting signal. This Homo sapiens (Human) protein is AP-4 complex subunit mu-1.